The primary structure comprises 297 residues: Ribosome production factor 2 homolog (297 aa).

One can recognise a Brix domain in the interval 28–232 (KKALFCRGAK…VMRKKLADDA (205 aa)).

It belongs to the RPF2 family.

It localises to the nucleus. The protein localises to the nucleolus. This chain is Ribosome production factor 2 homolog, found in Caenorhabditis elegans.